The primary structure comprises 377 residues: N-acetyldiaminopimelate deacetylase (377 aa).

Aspartate 69 is an active-site residue. Glutamate 128 (proton acceptor) is an active-site residue.

Belongs to the peptidase M20A family. N-acetyldiaminopimelate deacetylase subfamily.

It catalyses the reaction N-acetyl-(2S,6S)-2,6-diaminopimelate + H2O = (2S,6S)-2,6-diaminopimelate + acetate. Its pathway is amino-acid biosynthesis; L-lysine biosynthesis via DAP pathway; LL-2,6-diaminopimelate from (S)-tetrahydrodipicolinate (acetylase route): step 3/3. In terms of biological role, catalyzes the conversion of N-acetyl-diaminopimelate to diaminopimelate and acetate. This Streptococcus sanguinis (strain SK36) protein is N-acetyldiaminopimelate deacetylase.